Consider the following 159-residue polypeptide: Small ribosomal subunit protein uS7 (159 aa).

The protein belongs to the universal ribosomal protein uS7 family. In terms of assembly, part of the 30S ribosomal subunit. Contacts proteins S9 and S11.

Its function is as follows. One of the primary rRNA binding proteins, it binds directly to 16S rRNA where it nucleates assembly of the head domain of the 30S subunit. Is located at the subunit interface close to the decoding center, probably blocks exit of the E-site tRNA. The protein is Small ribosomal subunit protein uS7 of Sulfurihydrogenibium sp. (strain YO3AOP1).